Consider the following 698-residue polypeptide: DNA ligase (698 aa).

Residues 35-39 (DSVYD), 84-85 (SL), and Glu-123 each bind NAD(+). Catalysis depends on Lys-125, which acts as the N6-AMP-lysine intermediate. 4 residues coordinate NAD(+): Arg-146, Glu-183, Lys-302, and Lys-326. Zn(2+) is bound by residues Cys-420, Cys-423, Cys-438, and Cys-443. The BRCT domain maps to 612–698 (NGKGHLNGQT…QNSADTIHLL (87 aa)).

The protein belongs to the NAD-dependent DNA ligase family. LigA subfamily. The cofactor is Mg(2+). It depends on Mn(2+) as a cofactor.

The catalysed reaction is NAD(+) + (deoxyribonucleotide)n-3'-hydroxyl + 5'-phospho-(deoxyribonucleotide)m = (deoxyribonucleotide)n+m + AMP + beta-nicotinamide D-nucleotide.. Functionally, DNA ligase that catalyzes the formation of phosphodiester linkages between 5'-phosphoryl and 3'-hydroxyl groups in double-stranded DNA using NAD as a coenzyme and as the energy source for the reaction. It is essential for DNA replication and repair of damaged DNA. This Synechococcus sp. (strain WH7803) protein is DNA ligase.